A 375-amino-acid chain; its full sequence is Queuine tRNA-ribosyltransferase (375 aa).

Residue aspartate 89 is the Proton acceptor of the active site. Substrate contacts are provided by residues 89-93 (DSGGF), aspartate 143, glutamine 187, and glycine 214. The interval 245–251 (GVGKPED) is RNA binding. The active-site Nucleophile is aspartate 264. The RNA binding; important for wobble base 34 recognition stretch occupies residues 269–273 (TRNAR). Zn(2+)-binding residues include cysteine 302, cysteine 304, cysteine 307, and histidine 333.

Belongs to the queuine tRNA-ribosyltransferase family. Homodimer. Within each dimer, one monomer is responsible for RNA recognition and catalysis, while the other monomer binds to the replacement base PreQ1. Requires Zn(2+) as cofactor.

It catalyses the reaction 7-aminomethyl-7-carbaguanine + guanosine(34) in tRNA = 7-aminomethyl-7-carbaguanosine(34) in tRNA + guanine. Its pathway is tRNA modification; tRNA-queuosine biosynthesis. In terms of biological role, catalyzes the base-exchange of a guanine (G) residue with the queuine precursor 7-aminomethyl-7-deazaguanine (PreQ1) at position 34 (anticodon wobble position) in tRNAs with GU(N) anticodons (tRNA-Asp, -Asn, -His and -Tyr). Catalysis occurs through a double-displacement mechanism. The nucleophile active site attacks the C1' of nucleotide 34 to detach the guanine base from the RNA, forming a covalent enzyme-RNA intermediate. The proton acceptor active site deprotonates the incoming PreQ1, allowing a nucleophilic attack on the C1' of the ribose to form the product. After dissociation, two additional enzymatic reactions on the tRNA convert PreQ1 to queuine (Q), resulting in the hypermodified nucleoside queuosine (7-(((4,5-cis-dihydroxy-2-cyclopenten-1-yl)amino)methyl)-7-deazaguanosine). This chain is Queuine tRNA-ribosyltransferase, found in Escherichia coli O81 (strain ED1a).